Here is a 258-residue protein sequence, read N- to C-terminus: 14-3-3 protein homolog (258 aa).

The protein belongs to the 14-3-3 family.

In Encephalitozoon cuniculi (strain GB-M1) (Microsporidian parasite), this protein is 14-3-3 protein homolog.